The sequence spans 218 residues: Glutathione S-transferase Mu 1 (218 aa).

The GST N-terminal domain occupies 2 to 88; the sequence is PMILGYWNVR…YLARKHHLDG (87 aa). A glutathione-binding site is contributed by 7-8; it reads YW. T34 is modified (phosphothreonine). Glutathione contacts are provided by residues 43 to 46, K50, and 59 to 60; these read RSQW and NL. S67 bears the Phosphoserine mark. Glutathione is bound at residue 72 to 73; the sequence is QS. The 119-residue stretch at 90–208 folds into the GST C-terminal domain; it reads TEEERIRADI…KSSRYIATPI (119 aa). Substrate is bound at residue Y116. A Phosphoserine modification is found at S210.

Homodimer.

Its subcellular location is the cytoplasm. The enzyme catalyses RX + glutathione = an S-substituted glutathione + a halide anion + H(+). It carries out the reaction prostaglandin A2 + glutathione = prostaglandin A2-S-(R)-glutathione. The catalysed reaction is prostaglandin J2 + glutathione = prostaglandin J2-S-(R)-glutathione. It catalyses the reaction prostaglandin J2 + glutathione = prostaglandin J2-S-(S)-glutathione. The enzyme catalyses prostaglandin A2 + glutathione = prostaglandin A2-S-(S)-glutathione. It carries out the reaction 11(S)-hydroxy-14(S),15(S)-epoxy-(5Z,8Z,12E)-eicosatrienoate + glutathione = (11S,15S)-dihydroxy-14(R)-S-glutathionyl-(5Z,8Z,12E)-eicosatrienoate. Its function is as follows. Conjugation of reduced glutathione to a wide number of exogenous and endogenous hydrophobic electrophiles. Involved in the formation of glutathione conjugates of both prostaglandin A2 (PGA2) and prostaglandin J2 (PGJ2). Participates in the formation of novel hepoxilin regioisomers. This Mus musculus (Mouse) protein is Glutathione S-transferase Mu 1.